The following is a 50-amino-acid chain: DNA replication protein repEA (50 aa).

In terms of biological role, involved in T4 DNA replication. Binds to ssDNA. In Enterobacteria phage T4 (Bacteriophage T4), this protein is DNA replication protein repEA (repEA).